Here is a 192-residue protein sequence, read N- to C-terminus: Phosphomevalonate kinase (192 aa).

ATP is bound by residues 17 to 23 and Arg141; that span reads KRKSGKD. Asn170 provides a ligand contact to substrate. 2 residues coordinate ATP: His171 and Gln180.

In terms of assembly, monomer.

The protein localises to the cytoplasm. It localises to the cytosol. It carries out the reaction (R)-5-phosphomevalonate + ATP = (R)-5-diphosphomevalonate + ADP. It participates in isoprenoid biosynthesis; isopentenyl diphosphate biosynthesis via mevalonate pathway; isopentenyl diphosphate from (R)-mevalonate: step 2/3. In terms of biological role, catalyzes the reversible ATP-dependent phosphorylation of mevalonate 5-phosphate to produce mevalonate diphosphate and ADP, a key step in the mevalonic acid mediated biosynthesis of isopentenyl diphosphate and other polyisoprenoid metabolites. This Mus musculus (Mouse) protein is Phosphomevalonate kinase (Pmvk).